Reading from the N-terminus, the 507-residue chain is AMP phosphorylase (507 aa).

Residues G168, 194–199 (SRAITG), and T203 contribute to the AMP site. D256 (proton donor) is an active-site residue. S264 and K288 together coordinate AMP.

The protein belongs to the thymidine/pyrimidine-nucleoside phosphorylase family. Type 2 subfamily.

It carries out the reaction AMP + phosphate = alpha-D-ribose 1,5-bisphosphate + adenine. The enzyme catalyses CMP + phosphate = cytosine + alpha-D-ribose 1,5-bisphosphate. The catalysed reaction is UMP + phosphate = alpha-D-ribose 1,5-bisphosphate + uracil. Catalyzes the conversion of AMP and phosphate to adenine and ribose 1,5-bisphosphate (R15P). Exhibits phosphorylase activity toward CMP and UMP in addition to AMP. Functions in an archaeal AMP degradation pathway, together with R15P isomerase and RubisCO. The protein is AMP phosphorylase of Methanosarcina mazei (strain ATCC BAA-159 / DSM 3647 / Goe1 / Go1 / JCM 11833 / OCM 88) (Methanosarcina frisia).